The chain runs to 673 residues: Putative lipase atg15 (673 aa).

Over Met-1–Arg-7 the chain is Cytoplasmic. Residues Phe-8–Ala-28 traverse the membrane as a helical; Signal-anchor for type II membrane protein segment. The Lumenal segment spans residues Ser-29–Ser-673. Asn-156, Asn-191, Asn-213, Asn-271, and Asn-295 each carry an N-linked (GlcNAc...) asparagine glycan. Ser-311 (charge relay system) is an active-site residue. An N-linked (GlcNAc...) asparagine glycan is attached at Asn-457.

It belongs to the AB hydrolase superfamily. Lipase family. Binds to both phosphatidylinositol (PI) and phosphatidylinositol 3,5-bisphosphate (PIP2).

The protein resides in the endosome. It is found in the multivesicular body membrane. The protein localises to the prevacuolar compartment membrane. It catalyses the reaction a triacylglycerol + H2O = a diacylglycerol + a fatty acid + H(+). Functionally, lipase which is essential for lysis of subvacuolar cytoplasm to vacuole targeted bodies and intravacuolar autophagic bodies. Involved in the lysis of intravacuolar multivesicular body (MVB) vesicles. The intravacuolar membrane disintegration by atg15 is critical to life span extension. In Penicillium rubens (strain ATCC 28089 / DSM 1075 / NRRL 1951 / Wisconsin 54-1255) (Penicillium chrysogenum), this protein is Putative lipase atg15 (atg15).